A 287-amino-acid polypeptide reads, in one-letter code: AA9 family lytic polysaccharide monooxygenase C (287 aa).

A signal peptide spans 1–16; that stretch reads MKSVLVALATATAVSA. Position 17 (His-17) interacts with Cu(2+). Residue Asn-22 is glycosylated (N-linked (GlcNAc...) asparagine). 2 disulfides stabilise this stretch: Cys-77/Cys-230 and Cys-200/Cys-284. Position 114 (His-114) interacts with Cu(2+). The O2 site is built by His-216 and Gln-225. Residue Tyr-227 participates in Cu(2+) binding.

Belongs to the polysaccharide monooxygenase AA9 family. It depends on Cu(2+) as a cofactor.

The protein localises to the secreted. It carries out the reaction [(1-&gt;4)-beta-D-glucosyl]n+m + reduced acceptor + O2 = 4-dehydro-beta-D-glucosyl-[(1-&gt;4)-beta-D-glucosyl]n-1 + [(1-&gt;4)-beta-D-glucosyl]m + acceptor + H2O.. Functionally, lytic polysaccharide monooxygenase (LPMO) that depolymerizes crystalline and amorphous polysaccharides via the oxidation of scissile alpha- or beta-(1-4)-glycosidic bonds, yielding C1 or C4 oxidation products. Catalysis by LPMOs requires the reduction of the active-site copper from Cu(II) to Cu(I) by a reducing agent and H(2)O(2) or O(2) as a cosubstrate. This Podospora anserina (strain S / ATCC MYA-4624 / DSM 980 / FGSC 10383) (Pleurage anserina) protein is AA9 family lytic polysaccharide monooxygenase C.